A 400-amino-acid chain; its full sequence is Enoyl-[acyl-carrier-protein] reductase [NADH] (400 aa).

Residues 74 to 75 (FE), 111 to 112 (DA), and 139 to 140 (VA) each bind NAD(+). Residue Y225 coordinates substrate. Y235 functions as the Proton donor in the catalytic mechanism. NAD(+) is bound by residues K244 and 273 to 275 (VVT).

The protein belongs to the TER reductase family. In terms of assembly, monomer.

It carries out the reaction a 2,3-saturated acyl-[ACP] + NAD(+) = a (2E)-enoyl-[ACP] + NADH + H(+). The protein operates within lipid metabolism; fatty acid biosynthesis. In terms of biological role, involved in the final reduction of the elongation cycle of fatty acid synthesis (FAS II). Catalyzes the reduction of a carbon-carbon double bond in an enoyl moiety that is covalently linked to an acyl carrier protein (ACP). This is Enoyl-[acyl-carrier-protein] reductase [NADH] from Psychromonas ingrahamii (strain DSM 17664 / CCUG 51855 / 37).